Consider the following 404-residue polypeptide: Phosphopentomutase (404 aa).

The Mn(2+) site is built by Asp10, Asp303, His308, Asp344, His345, and His356.

The protein belongs to the phosphopentomutase family. It depends on Mn(2+) as a cofactor.

It is found in the cytoplasm. It catalyses the reaction 2-deoxy-alpha-D-ribose 1-phosphate = 2-deoxy-D-ribose 5-phosphate. The enzyme catalyses alpha-D-ribose 1-phosphate = D-ribose 5-phosphate. It functions in the pathway carbohydrate degradation; 2-deoxy-D-ribose 1-phosphate degradation; D-glyceraldehyde 3-phosphate and acetaldehyde from 2-deoxy-alpha-D-ribose 1-phosphate: step 1/2. Isomerase that catalyzes the conversion of deoxy-ribose 1-phosphate (dRib-1-P) and ribose 1-phosphate (Rib-1-P) to deoxy-ribose 5-phosphate (dRib-5-P) and ribose 5-phosphate (Rib-5-P), respectively. The polypeptide is Phosphopentomutase (Shewanella sp. (strain W3-18-1)).